We begin with the raw amino-acid sequence, 100 residues long: Integration host factor subunit alpha 2 (100 aa).

The protein belongs to the bacterial histone-like protein family. As to quaternary structure, heterodimer of an alpha and a beta chain.

In terms of biological role, this protein is one of the two subunits of integration host factor, a specific DNA-binding protein that functions in genetic recombination as well as in transcriptional and translational control. This chain is Integration host factor subunit alpha 2, found in Dechloromonas aromatica (strain RCB).